Consider the following 375-residue polypeptide: Filamin-binding LIM protein 1 (375 aa).

Positions 1–69 (MASKPEKRVA…KTWTPSGKTN (69 aa)) are filamin-binding. Residues 40 to 176 (ARPWEMLPTK…PPPEEPVTLP (137 aa)) form a disordered region. The span at 60 to 83 (KTWTPSGKTNASLSGVTPQLSNGG) shows a compositional bias: polar residues. 2 stretches are compositionally biased toward pro residues: residues 98 to 107 (LPPPPPPPSA) and 133 to 144 (LPPPPPPPPPQA). LIM zinc-binding domains follow at residues 183–244 (DVCG…TLEK), 245–302 (CGKC…RKFA), and 303–372 (PVCS…RSAA). The tract at residues 278 to 375 (ISDESFALDS…HLKRSAAGCC (98 aa)) is FERMT2-binding.

In terms of assembly, interacts with FERMT2, FLNA, FLNB and FLNC. Interacts with NKX2-5.

The protein localises to the cell junction. It is found in the focal adhesion. Its subcellular location is the cytoplasm. The protein resides in the cytoskeleton. It localises to the stress fiber. Functionally, serves as an anchoring site for cell-ECM adhesion proteins and filamin-containing actin filaments. Is implicated in cell shape modulation (spreading) and motility. May participate in the regulation of filamin-mediated cross-linking and stabilization of actin filaments. May also regulate the assembly of filamin-containing signaling complexes that control actin assembly. Promotes dissociation of FLNA from ITGB3 and ITGB7. Promotes activation of integrins and regulates integrin-mediated cell-cell adhesion. In Mus musculus (Mouse), this protein is Filamin-binding LIM protein 1 (Fblim1).